The sequence spans 1119 residues: uncharacterized protein (1119 aa).

Positions 1 to 21 are cleaved as a signal peptide; the sequence is MNNIYISLYIFFISYIIQLCF. The stretch at 170–206 forms a coiled coil; it reads NKKKLDKEKKKNVIELKEYLEDLKKRMFDMQKRLNDI. Disordered regions lie at residues 606 to 627 and 782 to 905; these read NNNT…IFNN and ASVQ…EHDE. The segment covering 788-891 has biased composition (basic and acidic residues); it reads DKGEDNNDND…EKDKSRDDNK (104 aa). The stretch at 890-920 forms a coiled coil; it reads NKAQNNNSTDNEEHDEITEQIGFLKNHNQKY.

This is an uncharacterized protein from Plasmodium falciparum (isolate 3D7).